A 98-amino-acid chain; its full sequence is Defensin-like protein 192 (98 aa).

A signal peptide spans M1–A27. Intrachain disulfides connect C32/C86, C45/C69, C54/C81, and C58/C83.

This sequence belongs to the DEFL family. Protease inhibitor I18 (RTI/MTI-2) subfamily.

The protein localises to the secreted. The chain is Defensin-like protein 192 (ATTI7) from Arabidopsis thaliana (Mouse-ear cress).